Consider the following 248-residue polypeptide: MRKPIIAGNWKMNKTVAETLQFINEIRDQAETTDVEVVLCCPFTALSEAKKALGASKIKLGAQNMHWEDNGAFTGEISAEMLKELGVDYILIGHSERRQYFNETDETVNKKIKKALEQKLMPILCVGETLQEREAAQTFDVIKNQITIDLEGILPDSMKDIVIAYEPIWAIGTGKTASSQDANHVIAYIRQLIQEKYDDGISETVRIQYGGSVKPENATEIMNEEDIDGALVGGASLKADAFLGIVNF.

Asn9 to Lys11 lines the substrate pocket. Catalysis depends on His94, which acts as the Electrophile. Glu166 functions as the Proton acceptor in the catalytic mechanism. Residues Gly172, Ser212, and Gly233–Gly234 contribute to the substrate site.

The protein belongs to the triosephosphate isomerase family. In terms of assembly, homodimer.

The protein resides in the cytoplasm. It carries out the reaction D-glyceraldehyde 3-phosphate = dihydroxyacetone phosphate. It participates in carbohydrate biosynthesis; gluconeogenesis. Its pathway is carbohydrate degradation; glycolysis; D-glyceraldehyde 3-phosphate from glycerone phosphate: step 1/1. Its function is as follows. Involved in the gluconeogenesis. Catalyzes stereospecifically the conversion of dihydroxyacetone phosphate (DHAP) to D-glyceraldehyde-3-phosphate (G3P). In Alkaliphilus metalliredigens (strain QYMF), this protein is Triosephosphate isomerase.